The primary structure comprises 565 residues: MKSPTPSRPQKMALIPACIFLCFAALSVQAEETSVTPQPPDILLGPLFNDVQNAKLFPDQKTFADAVPNSDPLMILADYRMQQNQSGFDLRHFVNVNFTLPKEGEKYVPPEGQSLREHIDGLWPVLTRATENTEKWDSLLPLPEPYVVPGGRFREVYYWDSYFTMLGLAESGHWDKVADMVANFAHEIDTYGHIPNGNRSYYLSRSQPPFFALMVELLAQHEGDAALKQYLPQMQKEYAYWMDGVENLQAGQQEKRVVKLQDGTLLNRYWDDRDTPRPESWVEDIATAKSNPNRPATEIYRDLRSAAASGWDFSSRWMDNPQQLNTLRTTSIVPVDLNSLMFKMEKILARASKAAGDNAMANQYETLANARQKGIEKYLWNDQQGWYADYDLKSHKVRNQLTAAALFPLYVNAAAKDRASKMATATKTHLLQPGGLNTTSVKSGQQWDAPNGWAPLQWVATEGLQNYGQKEVAMDISWHFLTNVQNTYDREKKLVEKYDVSATGTGGGGGEYPLQDGFGWTNGVTLKMLDLICPKEQPCDNVPATRPLSESTTQPLKQKEAEPTP.

The signal sequence occupies residues 1 to 30; the sequence is MKSPTPSRPQKMALIPACIFLCFAALSVQA. Residues Arg-152, 159 to 160, Asn-196, 205 to 207, 277 to 279, and Gly-310 contribute to the substrate site; these read WD, RSQ, and RPE. Active-site proton donor/acceptor residues include Asp-312 and Glu-496. Glu-511 is a substrate binding site. The segment at 539-565 is disordered; it reads CDNVPATRPLSESTTQPLKQKEAEPTP.

This sequence belongs to the glycosyl hydrolase 37 family. In terms of assembly, monomer.

The protein resides in the periplasm. The catalysed reaction is alpha,alpha-trehalose + H2O = alpha-D-glucose + beta-D-glucose. Provides the cells with the ability to utilize trehalose at high osmolarity by splitting it into glucose molecules that can subsequently be taken up by the phosphotransferase-mediated uptake system. The sequence is that of Periplasmic trehalase from Escherichia coli (strain SMS-3-5 / SECEC).